We begin with the raw amino-acid sequence, 110 residues long: UPF0122 protein spr1167 (110 aa).

The protein belongs to the UPF0122 family.

Functionally, might take part in the signal recognition particle (SRP) pathway. This is inferred from the conservation of its genetic proximity to ftsY/ffh. May be a regulatory protein. The protein is UPF0122 protein spr1167 of Streptococcus pneumoniae (strain ATCC BAA-255 / R6).